We begin with the raw amino-acid sequence, 690 residues long: Polyribonucleotide nucleotidyltransferase (690 aa).

Mg(2+) is bound by residues Asp483 and Asp489. One can recognise a KH domain in the interval 550–609 (PKMEQITVDKKDIAAVIGKGGATIREIVEKSGAKLDVNDEGVVTVAAPDEESRNIAMQMI). Positions 619–686 (NKIYSGKVMK…DRGKVKLSMK (68 aa)) constitute an S1 motif domain.

The protein belongs to the polyribonucleotide nucleotidyltransferase family. Mg(2+) serves as cofactor.

The protein localises to the cytoplasm. The enzyme catalyses RNA(n+1) + phosphate = RNA(n) + a ribonucleoside 5'-diphosphate. In terms of biological role, involved in mRNA degradation. Catalyzes the phosphorolysis of single-stranded polyribonucleotides processively in the 3'- to 5'-direction. The chain is Polyribonucleotide nucleotidyltransferase from Pelagibacter ubique (strain HTCC1062).